Reading from the N-terminus, the 484-residue chain is Glycogen synthase (484 aa).

Lysine 15 lines the ADP-alpha-D-glucose pocket.

The protein belongs to the glycosyltransferase 1 family. Bacterial/plant glycogen synthase subfamily.

The catalysed reaction is [(1-&gt;4)-alpha-D-glucosyl](n) + ADP-alpha-D-glucose = [(1-&gt;4)-alpha-D-glucosyl](n+1) + ADP + H(+). The protein operates within glycan biosynthesis; glycogen biosynthesis. In terms of biological role, synthesizes alpha-1,4-glucan chains using ADP-glucose. This chain is Glycogen synthase (glgA), found in Bacillus subtilis (strain 168).